Here is a 418-residue protein sequence, read N- to C-terminus: MTISLTPLDLSAIRADFPILKRVMRGGNQLAYLDSGATSQRPVQVLDAEREFLVTSNGAVHRGAHQLMEEATDAYERGRVDIAAFIGAAADELVFTKNATESLNLVSYVFGDNRFEGTSGDGGDVIVTTELEHHANLIPWQELARRIGATLRWYGVTDDGQIDLDSLQLDERVKVVAFSHHSNVTGAVAPVRELVARAKEVGALTVLDACQSVPHQPVDLHGLGVDFAAFSGHKMLGPNGIGVLYARRELLSVMPPFLTGGSMIETVTMESTTYAPAPQRFEAGTPMTSQVVGLAAAARYLDAIGMKAVEAHERELVAAAVEGLSRIDGVRIIGPKSMENRGSPVSFVVDGVHAHDIGQVLDDDGVAVRVGHHCALPLHRRFALAATARASFAVYNTVDEVDRLVAGVLRALDFFGRE.

The residue at position 234 (Lys-234) is an N6-(pyridoxal phosphate)lysine. Residue Cys-374 is the Cysteine persulfide intermediate of the active site.

Belongs to the class-V pyridoxal-phosphate-dependent aminotransferase family. Csd subfamily. Pyridoxal 5'-phosphate serves as cofactor.

The catalysed reaction is (sulfur carrier)-H + L-cysteine = (sulfur carrier)-SH + L-alanine. Functionally, catalyzes the removal of elemental sulfur and selenium atoms from L-cysteine, L-cystine, L-selenocysteine, and L-selenocystine to produce L-alanine. The polypeptide is Probable cysteine desulfurase 2 (csd2) (Mycobacterium leprae (strain TN)).